We begin with the raw amino-acid sequence, 183 residues long: Threonylcarbamoyl-AMP synthase (183 aa).

In terms of domain architecture, YrdC-like spans 1–183 (MNREQIADAL…LRTNQLFRQG (183 aa)).

It belongs to the SUA5 family. TsaC subfamily.

The protein resides in the cytoplasm. It carries out the reaction L-threonine + hydrogencarbonate + ATP = L-threonylcarbamoyladenylate + diphosphate + H2O. Functionally, required for the formation of a threonylcarbamoyl group on adenosine at position 37 (t(6)A37) in tRNAs that read codons beginning with adenine. Catalyzes the conversion of L-threonine, HCO(3)(-)/CO(2) and ATP to give threonylcarbamoyl-AMP (TC-AMP) as the acyladenylate intermediate, with the release of diphosphate. The sequence is that of Threonylcarbamoyl-AMP synthase from Haemophilus influenzae (strain ATCC 51907 / DSM 11121 / KW20 / Rd).